The sequence spans 306 residues: UDP-3-O-acyl-N-acetylglucosamine deacetylase (306 aa).

Zn(2+)-binding residues include His-79, His-238, and Asp-242. Residue His-265 is the Proton donor of the active site.

Belongs to the LpxC family. Zn(2+) serves as cofactor.

It carries out the reaction a UDP-3-O-[(3R)-3-hydroxyacyl]-N-acetyl-alpha-D-glucosamine + H2O = a UDP-3-O-[(3R)-3-hydroxyacyl]-alpha-D-glucosamine + acetate. It participates in glycolipid biosynthesis; lipid IV(A) biosynthesis; lipid IV(A) from (3R)-3-hydroxytetradecanoyl-[acyl-carrier-protein] and UDP-N-acetyl-alpha-D-glucosamine: step 2/6. Functionally, catalyzes the hydrolysis of UDP-3-O-myristoyl-N-acetylglucosamine to form UDP-3-O-myristoylglucosamine and acetate, the committed step in lipid A biosynthesis. This is UDP-3-O-acyl-N-acetylglucosamine deacetylase from Shewanella sp. (strain ANA-3).